A 643-amino-acid polypeptide reads, in one-letter code: Alpha-dioxygenase PIOX (643 aa).

The active-site Proton acceptor is the His-167. Asp-168 contributes to the Ca(2+) binding site. Heme b is bound at residue His-172. Ca(2+) is bound by residues Thr-220, Trp-222, Asp-224, and Ser-226. Heme b-binding residues include His-392, Arg-489, and Arg-493.

The protein belongs to the peroxidase family. Requires heme b as cofactor. It depends on Ca(2+) as a cofactor.

The enzyme catalyses a 1,2-saturated fatty acid + O2 = a (2R)-2-hydroperoxy fatty acid. It carries out the reaction (9Z,12Z,15Z)-octadecatrienoate + O2 = (R)-2-hydroperoxy-(9Z,12Z,15Z)-octadecatrienoate. The catalysed reaction is (9Z,12Z)-octadecadienoate + O2 = (2R,9Z,12Z)-2-hydroperoxyoctadecadienoate. Functionally, alpha-dioxygenase that catalyzes the primary oxygenation step of a variety of 14-20 carbon fatty acids, containing up to three unsaturated bonds, into their corresponding 2R-hydroperoxides. Involved in the production of oxylipins that function in cell signaling, wound healing, and protection from infection. The protein is Alpha-dioxygenase PIOX of Nicotiana tabacum (Common tobacco).